A 125-amino-acid polypeptide reads, in one-letter code: MAHKIAIGLVCVLYALHIMSAVCEVSEQEGVGEDNATEDEDYEDFFKPVTCYFANSTVGPLRPPNCTVVCTNNTAWWNDTKSDGGHCYSEYRPEKRTHSREIYNCTIGVCGNGTCIANHTYADCW.

Residues 1–21 (MAHKIAIGLVCVLYALHIMSA) form the signal peptide. N-linked (GlcNAc...) asparagine glycosylation is found at Asn-35, Asn-55, Asn-65, Asn-72, Asn-78, Asn-104, Asn-112, and Asn-118. 3 disulfides stabilise this stretch: Cys-70/Cys-110, Cys-87/Cys-115, and Cys-105/Cys-124.

It is found in the secreted. Salivary chemokine-binding protein which has chemokine-neutralizing activity and binds to host chemokines CCL1, CCL2, CCL3, CCL3L1, CCL7, CCL8, CCL11, CCL12, CCL13, CCL14, CCL15, CCL16, CCL18 and CCL23. Binds to CCL8 with 1:1 stoichiometry and disrupts CCL8 homodimer formation. The polypeptide is Evasin P672 (Rhipicephalus pulchellus (Yellow backed tick)).